Here is a 374-residue protein sequence, read N- to C-terminus: Homeobox protein knotted-1-like 13 (374 aa).

Residues 214–242 (TGASPGEGTGATMSDGEDDQADSEANMYD) are disordered. An ELK domain is found at 270–290 (ELKHELKQGYKEKLIDIREEI). The homeobox; TALE-type DNA-binding region spans 291–354 (LRKRRAGKLP…NQRKRNWHSN (64 aa)). The disordered stretch occupies residues 347 to 374 (RKRNWHSNPSSSTSVKTKRKSNAGDNNS).

It belongs to the TALE/KNOX homeobox family. Isoforms 1 and 2 are expressed in roots, stems, shoot meristem, leaf blades, leaf sheaths and flowers. Isoform 3 is expressed in stems, shoot meristem, rachis, leaf blades and leaf sheaths.

Its subcellular location is the nucleus. In terms of biological role, isoform 3 acts as a transcription activator, but isoforms 1 and 2 do not. This chain is Homeobox protein knotted-1-like 13 (OSH45), found in Oryza sativa subsp. japonica (Rice).